A 166-amino-acid chain; its full sequence is MAASVTVIGIDPGSQCTGWGIVREASGVLTLVNCGAIRPKGADFAARLGDLYRQLADVVRAHTPDEAAVEDVHAAQNVATALKLGQARGVVVAACAAHGVPVIDYRPSVIKKALVGTGRAEKEQVGYMVGQVLGVRPDWKLDTGDALAAAICHLNQRRLTRLAGLA.

Catalysis depends on residues Asp-11, Glu-70, and Asp-142. Residues Asp-11, Glu-70, and Asp-142 each contribute to the Mg(2+) site.

The protein belongs to the RuvC family. Homodimer which binds Holliday junction (HJ) DNA. The HJ becomes 2-fold symmetrical on binding to RuvC with unstacked arms; it has a different conformation from HJ DNA in complex with RuvA. In the full resolvosome a probable DNA-RuvA(4)-RuvB(12)-RuvC(2) complex forms which resolves the HJ. Mg(2+) serves as cofactor.

The protein localises to the cytoplasm. The enzyme catalyses Endonucleolytic cleavage at a junction such as a reciprocal single-stranded crossover between two homologous DNA duplexes (Holliday junction).. Functionally, the RuvA-RuvB-RuvC complex processes Holliday junction (HJ) DNA during genetic recombination and DNA repair. Endonuclease that resolves HJ intermediates. Cleaves cruciform DNA by making single-stranded nicks across the HJ at symmetrical positions within the homologous arms, yielding a 5'-phosphate and a 3'-hydroxyl group; requires a central core of homology in the junction. The consensus cleavage sequence is 5'-(A/T)TT(C/G)-3'. Cleavage occurs on the 3'-side of the TT dinucleotide at the point of strand exchange. HJ branch migration catalyzed by RuvA-RuvB allows RuvC to scan DNA until it finds its consensus sequence, where it cleaves and resolves the cruciform DNA. This Nitratidesulfovibrio vulgaris (strain DP4) (Desulfovibrio vulgaris) protein is Crossover junction endodeoxyribonuclease RuvC.